Consider the following 124-residue polypeptide: Large ribosomal subunit protein eL31 (124 aa).

The protein belongs to the eukaryotic ribosomal protein eL31 family.

This Aedes aegypti (Yellowfever mosquito) protein is Large ribosomal subunit protein eL31 (RpL31).